The chain runs to 427 residues: UPF0229 protein YeaH (427 aa).

Positions 79-90 (NDHFIQNDRIER) are enriched in basic and acidic residues. A disordered region spans residues 79 to 110 (NDHFIQNDRIERPQGGGGGSGSGQGQASQDGE). Residues 92-102 (QGGGGGSGSGQ) are compositionally biased toward gly residues.

The protein belongs to the UPF0229 family.

The sequence is that of UPF0229 protein YeaH from Salmonella paratyphi B (strain ATCC BAA-1250 / SPB7).